Here is a 373-residue protein sequence, read N- to C-terminus: Probable tRNA sulfurtransferase (373 aa).

In terms of domain architecture, THUMP spans 54-158 (NKNIEELSKV…NDVAYFYYKI (105 aa)). ATP is bound by residues 176-177 (LF), 201-202 (NF), lysine 256, glycine 278, and glutamine 287.

Belongs to the ThiI family.

It is found in the cytoplasm. The enzyme catalyses [ThiI sulfur-carrier protein]-S-sulfanyl-L-cysteine + a uridine in tRNA + 2 reduced [2Fe-2S]-[ferredoxin] + ATP + H(+) = [ThiI sulfur-carrier protein]-L-cysteine + a 4-thiouridine in tRNA + 2 oxidized [2Fe-2S]-[ferredoxin] + AMP + diphosphate. It catalyses the reaction [ThiS sulfur-carrier protein]-C-terminal Gly-Gly-AMP + S-sulfanyl-L-cysteinyl-[cysteine desulfurase] + AH2 = [ThiS sulfur-carrier protein]-C-terminal-Gly-aminoethanethioate + L-cysteinyl-[cysteine desulfurase] + A + AMP + 2 H(+). Its pathway is cofactor biosynthesis; thiamine diphosphate biosynthesis. Its function is as follows. Catalyzes the ATP-dependent transfer of a sulfur to tRNA to produce 4-thiouridine in position 8 of tRNAs, which functions as a near-UV photosensor. Also catalyzes the transfer of sulfur to the sulfur carrier protein ThiS, forming ThiS-thiocarboxylate. This is a step in the synthesis of thiazole, in the thiamine biosynthesis pathway. The sulfur is donated as persulfide by IscS. The chain is Probable tRNA sulfurtransferase from Saccharolobus islandicus (strain Y.N.15.51 / Yellowstone #2) (Sulfolobus islandicus).